The chain runs to 47 residues: Lysis protein for colicin E9 (47 aa).

The first 19 residues, 1–19 (MKKITGIILLLLAAIILAA), serve as a signal peptide directing secretion. Cys-20 carries N-palmitoyl cysteine lipidation. A lipid anchor (S-diacylglycerol cysteine) is attached at Cys-20.

It is found in the cell outer membrane. Its function is as follows. Lysis proteins are required for both colicin release and partial cell lysis. In Escherichia coli, this protein is Lysis protein for colicin E9 (lys).